The following is a 543-amino-acid chain: Mitochondrial distribution and morphology protein 34 (543 aa).

One can recognise an SMP-LTD domain in the interval 1-202; it reads MSFNVNWNSL…LPTLLHKVSL (202 aa). Positions 519-543 are disordered; that stretch reads AFSHNDPSITPFELPPPPYHQLSRA.

It belongs to the MDM34 family. As to quaternary structure, component of the ER-mitochondria encounter structure (ERMES) or MDM complex, composed of MMM1, MDM10, MDM12 and MDM34.

Its subcellular location is the mitochondrion outer membrane. Functionally, component of the ERMES/MDM complex, which serves as a molecular tether to connect the endoplasmic reticulum (ER) and mitochondria. Components of this complex are involved in the control of mitochondrial shape and protein biogenesis, and function in nonvesicular lipid trafficking between the ER and mitochondria. MDM34 is required for the interaction of the ER-resident membrane protein MMM1 and the outer mitochondrial membrane-resident beta-barrel protein MDM10. The chain is Mitochondrial distribution and morphology protein 34 from Clavispora lusitaniae (strain ATCC 42720) (Yeast).